We begin with the raw amino-acid sequence, 59 residues long: Protein QUA-QUINE STARCH (59 aa).

In terms of tissue distribution, expressed in hypocotyls, leaves, vasculature, hydathodes, trichomes, pedicels, sepals, filaments, mature pollen, stigma papillae, styles, siliques, root and shoot tips, but not in shoot meristem, petals or root epidermis.

The protein resides in the cytoplasm. Involved in regulating carbon and nitrogen allocation to starch and protein. This chain is Protein QUA-QUINE STARCH, found in Arabidopsis thaliana (Mouse-ear cress).